A 330-amino-acid polypeptide reads, in one-letter code: Fructose-1,6-bisphosphatase class 1 (330 aa).

4 residues coordinate Mg(2+): E84, D103, L105, and D106. Residues 106 to 109 (DGSS), N196, and K262 each bind substrate. E268 is a binding site for Mg(2+).

It belongs to the FBPase class 1 family. In terms of assembly, homotetramer. Mg(2+) serves as cofactor.

Its subcellular location is the cytoplasm. The enzyme catalyses beta-D-fructose 1,6-bisphosphate + H2O = beta-D-fructose 6-phosphate + phosphate. Its pathway is carbohydrate biosynthesis; gluconeogenesis. This chain is Fructose-1,6-bisphosphatase class 1, found in Shewanella sp. (strain W3-18-1).